A 182-amino-acid chain; its full sequence is Dirigent protein 1 (182 aa).

The N-terminal stretch at 1 to 24 (MAKRFLLLLPLLSSILLLAVSVTA) is a signal peptide. Residue Asn125 is glycosylated (N-linked (GlcNAc...) asparagine).

It belongs to the plant dirigent protein family. As to quaternary structure, homodimer.

The protein localises to the secreted. The protein resides in the extracellular space. Its subcellular location is the apoplast. In terms of biological role, dirigent proteins impart stereoselectivity on the phenoxy radical-coupling reaction, yielding optically active lignans from two molecules of coniferyl alcohol in the biosynthesis of lignans, flavonolignans, and alkaloids and thus plays a central role in plant secondary metabolism. The chain is Dirigent protein 1 (DIR1) from Arabidopsis thaliana (Mouse-ear cress).